A 315-amino-acid polypeptide reads, in one-letter code: MRSGGRCNSIENYEKVCRISSGSFGNVYRVRRKTDNRVFALKRMNPSMCYDTNGFSILYIREVMILKHIRHRNIMEIEEVVEGCEINDFFIVMECCDTDLRSVIHSVGKIGMKAARFLTCQMLKGLKFLHGAGIVHRDLKPSNILLMRDGGLRIADFGLARAIESQMTNLVVTLWYRPIEILLGSETYDESIDMWSVGCVVGEMLRGEPILAGEGEMDQLDRIFRLLGYPTDADFEGLDLPHFKNIRRPSTFEASFEGDFECYGEEAASFVRNLLSFDPRKRCTASQGLCSGFVADAEECPGELVDIVGRCTGDI.

Residues 13–294 (YEKVCRISSG…ASQGLCSGFV (282 aa)) form the Protein kinase domain. Residues 19-27 (ISSGSFGNV) and lysine 42 each bind ATP. Aspartate 138 acts as the Proton acceptor in catalysis.

The protein belongs to the protein kinase superfamily. CMGC Ser/Thr protein kinase family. CDC2/CDKX subfamily.

Its subcellular location is the nucleus. The enzyme catalyses L-seryl-[protein] + ATP = O-phospho-L-seryl-[protein] + ADP + H(+). It carries out the reaction L-threonyl-[protein] + ATP = O-phospho-L-threonyl-[protein] + ADP + H(+). In terms of biological role, may play a role in the control of the eukaryotic cell cycle. In Encephalitozoon cuniculi (strain GB-M1) (Microsporidian parasite), this protein is Probable cell division protein kinase ECU11_1290.